A 436-amino-acid chain; its full sequence is Flagellum-specific ATP synthase (436 aa).

Position 165 to 172 (165 to 172 (SGSGVGKS)) interacts with ATP.

It belongs to the ATPase alpha/beta chains family.

It localises to the cytoplasm. It catalyses the reaction ATP + H2O + 4 H(+)(in) = ADP + phosphate + 5 H(+)(out). Its function is as follows. Probable catalytic subunit of a protein translocase for flagellum-specific export, or a proton translocase involved in local circuits at the flagellum. May be involved in a specialized protein export pathway that proceeds without signal peptide cleavage. This Borreliella burgdorferi (strain ATCC 35210 / DSM 4680 / CIP 102532 / B31) (Borrelia burgdorferi) protein is Flagellum-specific ATP synthase (fliI).